A 260-amino-acid chain; its full sequence is Small ribosomal subunit protein uS2 (260 aa).

Over residues 228-240 (RKETKAENAEEAM) the composition is skewed to basic and acidic residues. Residues 228–260 (RKETKAENAEEAMKQAAEAEAEAAAPAAEESAE) form a disordered region. Low complexity predominate over residues 241 to 260 (KQAAEAEAEAAAPAAEESAE).

This sequence belongs to the universal ribosomal protein uS2 family.

In Oleidesulfovibrio alaskensis (strain ATCC BAA-1058 / DSM 17464 / G20) (Desulfovibrio alaskensis), this protein is Small ribosomal subunit protein uS2.